We begin with the raw amino-acid sequence, 1512 residues long: DNA (cytosine-5)-methyltransferase 2 (1512 aa).

The span at Met-1–Glu-22 shows a compositional bias: basic and acidic residues. 2 disordered regions span residues Met-1–Lys-35 and Ala-634–Glu-678. Positions Val-638–Val-662 are enriched in acidic residues. 2 consecutive BAH domains span residues Glu-707 to Pro-841 and Thr-909 to Pro-1026. The SAM-dependent MTase C5-type domain occupies Leu-1071–Lys-1505. Cys-1176 is a catalytic residue.

This sequence belongs to the class I-like SAM-binding methyltransferase superfamily. C5-methyltransferase family. Expressed at low levels in vegetative and floral organs.

Its subcellular location is the nucleus. The enzyme catalyses a 2'-deoxycytidine in DNA + S-adenosyl-L-methionine = a 5-methyl-2'-deoxycytidine in DNA + S-adenosyl-L-homocysteine + H(+). Functionally, maintains chromatin CpG methylation that plays a role in genomic imprinting, regulation of embryogenesis and seed viability. Required for proper patterns of CG DNA methylation in dividing cells. This chain is DNA (cytosine-5)-methyltransferase 2 (MET2), found in Arabidopsis thaliana (Mouse-ear cress).